The following is a 513-amino-acid chain: MNFPVLKGAGYVLVHTPDMIMHNGTTQTTEKIVNPESEYLKKLPEHLRSFEDVVAYAPNQTYIGSMTPEALGEIAMPWWTEDKKVAGADRYGKLGEIMPQDEFLALMSASDVFDLVLFEKEFIEGAKAKLAAHPVVGNLAESVNAGVELAEIEKQLSEFHAEGLYNNGKLVGCVKRAHDVDVNLNSHTMLENLAVKASGVLALANLIAKNNVNPAEVDYIIECSEEACGDMNQRGGGNFAKALAEMTGCVNATGSDMRGFCAGPTHALIAAAALVKSGVYKNVIIAAGGATAKLGMNGKDHVKKEMPILEDCLGGFAVLVSENDGVNPILRTDLVGRHTVATGSAPQAVIGSLVLSPLKAGGLKITDVDKYSVEMQNPDITKPAGAGDVPEANYKMIAALAVMGKEIERADIAAFVEKHGMVGWAPTQGHIPSGVPYIGFAISDLTEGSVNRTMIVGKGSLFLGRMTNLFDGVSIVAERNTGKVESGSSVSTEEIRKMIAESMKDFAAHLLAE.

Heterooctamer of four alpha and four beta subunits. Component of the glycine, sarcosine and betaine reductase complexes, together with proteins A and B.

It catalyses the reaction acetyl phosphate + [thioredoxin]-disulfide + NH4(+) + H2O = [thioredoxin]-dithiol + glycine + phosphate + H(+). The catalysed reaction is acetyl phosphate + methylamine + [thioredoxin]-disulfide + H2O = sarcosine + [thioredoxin]-dithiol + phosphate + H(+). The enzyme catalyses acetyl phosphate + trimethylamine + [thioredoxin]-disulfide + H2O = glycine betaine + [thioredoxin]-dithiol + phosphate + H(+). Functionally, in the first step of glycine, betaine and sarcosine reductases, the substrate is bound to component PB via a Schiff base intermediate. Then the PB-activated substrate is nucleophilically attacked by the selenol anion of component PA to transform it to a carboxymethylated selenoether and the respective amine. By action of component PC, acetyl phosphate is formed, leaving component PA in its oxidized state. Finally component PA becomes reduced by the thioredoxin system to start a new catalytic cycle of reductive deamination. This chain is Glycine/sarcosine/betaine reductase complex component C subunit beta (grdC), found in Peptoclostridium acidaminophilum (Eubacterium acidaminophilum).